A 510-amino-acid polypeptide reads, in one-letter code: NAD(P)H-quinone oxidoreductase subunit 2 B, chloroplastic (510 aa).

13 consecutive transmembrane segments (helical) span residues 24–44, 59–79, 99–119, 124–144, 150–170, 184–204, 229–249, 295–315, 323–343, 354–374, 395–415, 418–438, and 484–504; these read LLLF…GLIL, WFYF…LFRW, IFQF…VEYI, MAIT…MFLC, ITIF…SGYT, LLMG…LYGL, ISIA…LAPF, WHLL…LIAI, MLAY…IVGD, YMLF…LFGL, ALSL…AGFF, LHLF…IGLL, and MIVC…ILAI.

This sequence belongs to the complex I subunit 2 family. NDH is composed of at least 16 different subunits, 5 of which are encoded in the nucleus.

The protein resides in the plastid. The protein localises to the chloroplast thylakoid membrane. It carries out the reaction a plastoquinone + NADH + (n+1) H(+)(in) = a plastoquinol + NAD(+) + n H(+)(out). The enzyme catalyses a plastoquinone + NADPH + (n+1) H(+)(in) = a plastoquinol + NADP(+) + n H(+)(out). In terms of biological role, NDH shuttles electrons from NAD(P)H:plastoquinone, via FMN and iron-sulfur (Fe-S) centers, to quinones in the photosynthetic chain and possibly in a chloroplast respiratory chain. The immediate electron acceptor for the enzyme in this species is believed to be plastoquinone. Couples the redox reaction to proton translocation, and thus conserves the redox energy in a proton gradient. This chain is NAD(P)H-quinone oxidoreductase subunit 2 B, chloroplastic, found in Acorus calamus (Sweet flag).